The following is a 611-amino-acid chain: Protein Pixie (611 aa).

2 consecutive 4Fe-4S ferredoxin-type domains span residues 15 to 45 and 54 to 83; these read RIAI…MGKL and KIAS…IINL. ABC transporter domains follow at residues 78-323 and 350-570; these read ITII…FLDG and IKRM…LELL. Residues 118 to 125 and 387 to 394 each bind ATP; these read GQNGIGKS and GENGTGKT.

Belongs to the ABC transporter superfamily. ABCE family. In terms of assembly, interacts with components of eIF3 complex, namely eIF3a, eIF3j, eIF3b, eIF3c and eIF3i. Associates with the 40S ribosome subunit in an ATP-dependent manner and independently from the presence of the eIF3 complex. Forms a complex with Git and Pak; the interaction with Pak may be mediated by pix/dPIX. Post-translationally, ubiquitinated by Cnot4. Ubiquitination mediates the recruitment of autophagy receptors to the mitochondrial outer membrane and initiates mitophagy. As to expression, expressed in early and late larval imaginal disks (at protein level).

It is found in the cytoplasm. In terms of biological role, plays a role in translation initiation and quality control of translation. Together with pelo and HBS1, is required for 48S complex formation from 80S ribosomes and dissociation of vacant 80S ribosomes. Stabilizes core components of eIF3 complex promoting their assembly into translation initiation-competent complexes. Together with pelo and HBS1, recognizes stalled ribosomes and promotes dissociation of elongation complexes assembled on non-stop mRNAs; this triggers endonucleolytic cleavage of the mRNA, a mechanism to release non-functional ribosomes and to degrade damaged mRNAs as part of the No-Go Decay (NGD) pathway. Plays a role in the regulation of mRNA turnover. Plays a role in quality control of translation of mitochondrial outer membrane-localized mRNA. As part of the Pink1-regulated signaling, ubiquitinated by Cnot4 upon mitochondria damage; this modification generates polyubiquitin signals that recruits autophagy receptors to the mitochondrial outer membrane to initiate mitophagy. Required in the wing disk for cell division and growth as well as cell survival. During muscle embryogenesis, required for the recruitment of Pak to muscle attachments in the embryo, hence may play a role in proper muscle morphogenesis and proper guidance and targeting of subsets of myotubes. This is Protein Pixie from Drosophila melanogaster (Fruit fly).